The primary structure comprises 292 residues: Nucleotide-binding protein azo0399 (292 aa).

An ATP-binding site is contributed by 8–15; it reads GLSGSGKS. Residue 57-60 participates in GTP binding; the sequence is DMRS.

It belongs to the RapZ-like family.

Displays ATPase and GTPase activities. In Azoarcus sp. (strain BH72), this protein is Nucleotide-binding protein azo0399.